Here is a 197-residue protein sequence, read N- to C-terminus: Histocompatibility antigen 60c (197 aa).

A signal peptide spans 1-17 (MALLLLILESCSAGTYA). Residues N51, N81, and N114 are each glycosylated (N-linked (GlcNAc...) asparagine). S177 is lipidated: GPI-anchor amidated serine. The propeptide at 178–197 (MACKSSPFDGLIMILLIYIL) is removed in mature form.

It belongs to the NKG2D ligand family. In terms of tissue distribution, expressed in skin, and weakly in large intestine.

It is found in the cell membrane. Functionally, ligand for the KLRK1 immunosurveillance receptor. Binding to KLRK1 stimulates cell lysis in vitro. The polypeptide is Histocompatibility antigen 60c (Mus musculus (Mouse)).